The chain runs to 228 residues: 7-cyano-7-deazaguanine synthase (228 aa).

8-18 (LSGGMDSATTL) is an ATP binding site. Positions 188, 198, 201, and 204 each coordinate Zn(2+).

This sequence belongs to the QueC family. Zn(2+) serves as cofactor.

The catalysed reaction is 7-carboxy-7-deazaguanine + NH4(+) + ATP = 7-cyano-7-deazaguanine + ADP + phosphate + H2O + H(+). It functions in the pathway purine metabolism; 7-cyano-7-deazaguanine biosynthesis. Its function is as follows. Catalyzes the ATP-dependent conversion of 7-carboxy-7-deazaguanine (CDG) to 7-cyano-7-deazaguanine (preQ(0)). This chain is 7-cyano-7-deazaguanine synthase, found in Nitrosomonas europaea (strain ATCC 19718 / CIP 103999 / KCTC 2705 / NBRC 14298).